Reading from the N-terminus, the 356-residue chain is N-methyltransferase 4 (356 aa).

S-adenosyl-L-methionine-binding positions include 93 to 94 (QS), 128 to 136 (ILDIGCGFG), and 155 to 160 (TNSAEQ).

The protein belongs to the CFA/CMAS family. Expressed in stems, roots, flower buds and leaves.

Functionally, probable N-methyltransferase not involved in benzylisoquinoline metabolism. Shows no detectable activity with (s)-coclaurine, (R)- or (S)-reticuline, papaverine or (R,S)-tetrahydropapaverine. The chain is N-methyltransferase 4 (NMT4) from Papaver somniferum (Opium poppy).